A 400-amino-acid polypeptide reads, in one-letter code: MSIIKKIVFKRFNSTLKKTALHDLHVSLGGTMVPYAGYSMPVLYKGQTHIESHNWTRTNAGLFDVSHMLQSKLSGPHSVKFLQRVTPTDFNALPVGSGTLSVLLNPQGGVVDDTIITKENDDNEFYIVTNAGCAERDTEFFHDELQNGSTLDCQWKIIEGRSLLALQGPKAKDVLEPLLSKTAPGKDLKELFFGQRHEFALKDGSLVQIARGGYTGEDGFEISIANEKAVEFAEQLLANPVMKPIGLAARDSLRLEAGMCLYGHELDESITPVEAALNWVISKSRRDLVDQKYWFNGYAKIMDQLNNKTYSKVRVGFKYLKKGPAARNGVKIFLPDAETEVGLVTSGSASPTLNNINIGQAYVQKGYHKKGTKLLVQVRNKFYPIELAKMPLVPTHYYKQ.

Substrate is bound by residues Glu221, Arg250, and Tyr397.

Belongs to the GcvT family. In terms of assembly, component of the glycine decarboxylase complex (GDC), which is composed of four proteins: P, T, L and H.

The protein localises to the mitochondrion. The catalysed reaction is N(6)-[(R)-S(8)-aminomethyldihydrolipoyl]-L-lysyl-[protein] + (6S)-5,6,7,8-tetrahydrofolate = N(6)-[(R)-dihydrolipoyl]-L-lysyl-[protein] + (6R)-5,10-methylene-5,6,7,8-tetrahydrofolate + NH4(+). Its function is as follows. The glycine cleavage system (glycine decarboxylase complex) catalyzes the degradation of glycine. The chain is Aminomethyltransferase, mitochondrial (GCV1) from Saccharomyces cerevisiae (strain ATCC 204508 / S288c) (Baker's yeast).